The chain runs to 186 residues: Methylamine dehydrogenase light chain (186 aa).

Residues M1–A57 constitute a signal peptide (tat-type signal). 6 disulfides stabilise this stretch: C78–C143, C84–C116, C91–C176, C93–C141, C101–C132, and C133–C164. W112 carries the post-translational modification Tryptophylquinone. The tryptophan tryptophylquinone (Trp-Trp) cross-link spans W112 to W163.

It belongs to the aromatic amine dehydrogenase light chain family. In terms of assembly, heterotetramer of two light and two heavy chains. The cofactor is tryptophan tryptophylquinone residue. Predicted to be exported by the Tat system. The position of the signal peptide cleavage has not been experimentally proven. Post-translationally, tryptophan tryptophylquinone (TTQ) is formed by oxidation of the indole ring of a tryptophan to form tryptophylquinone followed by covalent cross-linking with another tryptophan residue.

Its subcellular location is the periplasm. It catalyses the reaction 2 oxidized [amicyanin] + methylamine + H2O = 2 reduced [amicyanin] + formaldehyde + NH4(+) + 2 H(+). The protein operates within one-carbon metabolism; methylamine degradation; formaldehyde from methylamine: step 1/1. Its function is as follows. Methylamine dehydrogenase carries out the oxidation of methylamine. Electrons are passed from methylamine dehydrogenase to amicyanin. The protein is Methylamine dehydrogenase light chain (mauA) of Methylobacillus flagellatus (strain ATCC 51484 / DSM 6875 / VKM B-1610 / KT).